A 380-amino-acid polypeptide reads, in one-letter code: MAPNLRKSHPLLKMINNSLIDLPTPSNISAWWNFGSLLGICLTTQILTGLLLAMHYTADTTLAFSSVAHTCRNVQYGWLIRNLHANGASFFFICIYLHIGRGFYYGSYLYKETWNTGIILLLTLMATAFVGYVLPWGQMSFWGATVITNLFSAIPYIGQTLVEWAWGGFSVDNPTLTRFFALHFLLPFMIAGLTLIHLTFLHESGSNNPLGIVANSDKIPFHPYYSTKDTLGFALMLLPLTTLALFSPNLLGDPENFTPANPLVTPPHIKPEWYFLFAYAILRSIPNKLGGVLALAASVLILFLIPLLHKSKQRTMTFRPLSQLLFWTLVANLTILTWIGSQPVEHPFIIIGQLASLTYFTILLILFPLIGTLENKMLNH.

Transmembrane regions (helical) follow at residues 34–54 (FGSL…LLAM), 78–99 (WLIR…YLHI), 114–134 (WNTG…GYVL), and 179–199 (FFAL…IHLT). Heme b-binding residues include His-84 and His-98. 2 residues coordinate heme b: His-183 and His-197. Residue His-202 coordinates a ubiquinone. 4 consecutive transmembrane segments (helical) span residues 227–247 (TKDT…ALFS), 289–309 (LGGV…PLLH), 321–341 (LSQL…WIGS), and 348–368 (FIII…ILFP).

Belongs to the cytochrome b family. In terms of assembly, the cytochrome bc1 complex contains 11 subunits: 3 respiratory subunits (MT-CYB, CYC1 and UQCRFS1), 2 core proteins (UQCRC1 and UQCRC2) and 6 low-molecular weight proteins (UQCRH/QCR6, UQCRB/QCR7, UQCRQ/QCR8, UQCR10/QCR9, UQCR11/QCR10 and a cleavage product of UQCRFS1). This cytochrome bc1 complex then forms a dimer. It depends on heme b as a cofactor.

The protein resides in the mitochondrion inner membrane. Its function is as follows. Component of the ubiquinol-cytochrome c reductase complex (complex III or cytochrome b-c1 complex) that is part of the mitochondrial respiratory chain. The b-c1 complex mediates electron transfer from ubiquinol to cytochrome c. Contributes to the generation of a proton gradient across the mitochondrial membrane that is then used for ATP synthesis. This Aptenodytes patagonicus (King penguin) protein is Cytochrome b (MT-CYB).